A 26-amino-acid polypeptide reads, in one-letter code: Acetyl-CoA acetyltransferase (26 aa).

The active-site Acyl-thioester intermediate is the Cys-21.

The protein belongs to the thiolase-like superfamily. Thiolase family. As to quaternary structure, homotetramer. Post-translationally, succinylation, adjacent to a coenzyme A binding site. Desuccinylated by SIRT5.

The protein localises to the mitochondrion. It carries out the reaction 2 acetyl-CoA = acetoacetyl-CoA + CoA. The sequence is that of Acetyl-CoA acetyltransferase from Sus scrofa (Pig).